Here is a 67-residue protein sequence, read N- to C-terminus: Large ribosomal subunit protein eL24 (67 aa).

The Zn(2+) site is built by C7, C10, C33, and C37. Residues 7–37 (CSYCGKEFEPGTGKMYVRNDGRVYFFCSRKC) form a C4-type zinc finger.

Belongs to the eukaryotic ribosomal protein eL24 family. Part of the 50S ribosomal subunit. Forms a cluster with proteins L3 and L14. It depends on Zn(2+) as a cofactor.

In terms of biological role, binds to the 23S rRNA. In Thermococcus sibiricus (strain DSM 12597 / MM 739), this protein is Large ribosomal subunit protein eL24.